Consider the following 265-residue polypeptide: MLRRFAVIGHPIAHSLSPVIHQMFAQQTQIELIYEKILGDDVKFEQQISDFFIQYGNGLNVTLPYKKRAYELAKIRTQRCTLAGAANTLWMEENQLHADNTDGIGLIRDLSRFLELKDKKILILGAGGAARGIIFPLLEAKPLQLIVANRTLEKAEELQRQFPQINVTSFAELTEFFDLIINATSTSLSGQVIVLPEEVLSHKPFCYDLAYNQKTSTAFVQYARNGGCEAVDGLGMLVEQAAEAFFTWNKVMPSTQKILEHLRSF.

Shikimate-binding positions include Ser15–Ser17 and Thr62. The Proton acceptor role is filled by Lys66. Positions 87 and 102 each coordinate shikimate. Residues Gly125–Ala129, Asn149–Lys154, and Leu209 contribute to the NADP(+) site. Tyr211 is a binding site for shikimate. Gly233 contacts NADP(+).

The protein belongs to the shikimate dehydrogenase family. As to quaternary structure, homodimer.

The enzyme catalyses shikimate + NADP(+) = 3-dehydroshikimate + NADPH + H(+). It participates in metabolic intermediate biosynthesis; chorismate biosynthesis; chorismate from D-erythrose 4-phosphate and phosphoenolpyruvate: step 4/7. In terms of biological role, involved in the biosynthesis of the chorismate, which leads to the biosynthesis of aromatic amino acids. Catalyzes the reversible NADPH linked reduction of 3-dehydroshikimate (DHSA) to yield shikimate (SA). In Legionella pneumophila subsp. pneumophila (strain Philadelphia 1 / ATCC 33152 / DSM 7513), this protein is Shikimate dehydrogenase (NADP(+)).